The primary structure comprises 120 residues: Small ribosomal subunit protein uS13 (120 aa).

The disordered stretch occupies residues 94 to 120 (GLPLRGQRTRTNARTRKGPRKAIAGKK).

Belongs to the universal ribosomal protein uS13 family. In terms of assembly, part of the 30S ribosomal subunit. Forms a loose heterodimer with protein S19. Forms two bridges to the 50S subunit in the 70S ribosome.

In terms of biological role, located at the top of the head of the 30S subunit, it contacts several helices of the 16S rRNA. In the 70S ribosome it contacts the 23S rRNA (bridge B1a) and protein L5 of the 50S subunit (bridge B1b), connecting the 2 subunits; these bridges are implicated in subunit movement. Contacts the tRNAs in the A and P-sites. The chain is Small ribosomal subunit protein uS13 from Azoarcus sp. (strain BH72).